We begin with the raw amino-acid sequence, 216 residues long: Cytidylate kinase (216 aa).

Residue 10 to 18 (GPAAAGKST) participates in ATP binding.

This sequence belongs to the cytidylate kinase family. Type 1 subfamily.

The protein localises to the cytoplasm. It carries out the reaction CMP + ATP = CDP + ADP. The catalysed reaction is dCMP + ATP = dCDP + ADP. The chain is Cytidylate kinase from Macrococcus caseolyticus (strain JCSC5402) (Macrococcoides caseolyticum).